Consider the following 49-residue polypeptide: Large ribosomal subunit protein bL33C (49 aa).

A disordered region spans residues 21 to 49 (KNKRNNPDRVEFKKYCPRDKKSTLHRETK). Basic and acidic residues predominate over residues 25-49 (NNPDRVEFKKYCPRDKKSTLHRETK).

This sequence belongs to the bacterial ribosomal protein bL33 family.

This chain is Large ribosomal subunit protein bL33C, found in Bacillus licheniformis (strain ATCC 14580 / DSM 13 / JCM 2505 / CCUG 7422 / NBRC 12200 / NCIMB 9375 / NCTC 10341 / NRRL NRS-1264 / Gibson 46).